We begin with the raw amino-acid sequence, 495 residues long: Calcium-dependent protein kinase 11 (495 aa).

The 259-residue stretch at 26-284 folds into the Protein kinase domain; it reads YLLGKKLGQG…AHEALCHPWI (259 aa). ATP-binding positions include 32–40 and Lys55; that span reads LGQGQFGTT. Asp150 functions as the Proton acceptor in the catalytic mechanism. Residue Ser190 is modified to Phosphoserine. Residues 290-320 form an autoinhibitory domain region; it reads APDKPLDPAVLSRLKQFSQMNKIKKMALRVI. EF-hand domains follow at residues 327–362, 363–398, 399–434, and 438–468; these read EEIG…VGSE, LMES…MNKM, EREE…FGLC, and LDDM…GDGV. Asp340, Asp342, Ser344, Thr346, Glu351, Asp376, Asp378, Ser380, Thr382, Glu387, Asp412, Asp414, Ser416, Tyr418, Glu423, Asp446, Asp448, Asp450, Lys452, and Glu457 together coordinate Ca(2+).

Belongs to the protein kinase superfamily. Ser/Thr protein kinase family. CDPK subfamily. Interacts with Di19.

The protein resides in the cytoplasm. Its subcellular location is the nucleus. It carries out the reaction L-seryl-[protein] + ATP = O-phospho-L-seryl-[protein] + ADP + H(+). The catalysed reaction is L-threonyl-[protein] + ATP = O-phospho-L-threonyl-[protein] + ADP + H(+). Its activity is regulated as follows. Activated by calcium. Autophosphorylation may play an important role in the regulation of the kinase activity. May play a role in signal transduction pathways that involve calcium as a second messenger. Functions as a regulator of the calcium-mediated abscisic acid (ABA) signaling pathway. Phosphorylates ABA-responsive transcription factors ABF1 and ABF4 in vitro. This chain is Calcium-dependent protein kinase 11 (CPK11), found in Arabidopsis thaliana (Mouse-ear cress).